The chain runs to 123 residues: MDDSKVVGGKVKKPGKRGRKPAKIDLKAKLERSRQSARECRARKKLRYQYLEELVSSRERAICALREELEMYKQWCMAMDQGKIPSEIRALLTGEEQNKSQQNSSRHPKAGKTDANTNSLVGN.

The segment at 1–24 (MDDSKVVGGKVKKPGKRGRKPAKI) is disordered. A compositionally biased stretch (basic residues) spans 10–21 (KVKKPGKRGRKP). The region spanning 23–86 (KIDLKAKLER…MAMDQGKIPS (64 aa)) is the bZIP domain. The tract at residues 29–60 (KLERSRQSARECRARKKLRYQYLEELVSSRER) is basic motif. The tract at residues 62-69 (ICALREEL) is leucine-zipper. The segment at 93 to 123 (TGEEQNKSQQNSSRHPKAGKTDANTNSLVGN) is disordered. Residues 114 to 123 (DANTNSLVGN) are compositionally biased toward polar residues.

This sequence belongs to the bZIP family. ATF subfamily. Interacts with CREB1; regulates CREB1 phosphorylation, stability and transcriptional activity. Post-translationally, phosphorylated by AMPK.

It is found in the nucleus. Its function is as follows. Probable regulator of CREB1 transcriptional activity which is involved in adipose cells differentiation. May also play a regulatory role in the cell cycle. In Rattus norvegicus (Rat), this protein is cAMP-responsive element-binding protein-like 2 (Crebl2).